Reading from the N-terminus, the 419-residue chain is Pygopus homolog 1 (419 aa).

2 disordered regions span residues 1–64 (MPAE…PNSD) and 175–338 (HFRQ…SSSD). Positions 18–30 (GDSGLDGLGGPGV) are enriched in gly residues. The short motif at 35 to 41 (PDKKKRK) is the Nuclear localization signal element. 2 stretches are compositionally biased toward polar residues: residues 175–221 (HFRQ…SNHS) and 240–255 (DFTQ…NSSA). Residues 276–286 (VNRNNAVNQEN) are compositionally biased toward low complexity. Positions 287–307 (SRSSSTEATNNNPANGTQNKP) are enriched in polar residues. A PHD-type zinc finger spans residues 340–398 (VYPCGICTNEVNDDQDAILCEASCQKWFHRICTGMTETAYGLLTAEASAVWGCDTCMAD). The interaction with H3K4me2 stretch occupies residues 341–388 (YPCGICTNEVNDDQDAILCEASCQKWFHRICTGMTETAYGLLTAEASA). The interval 373–391 (GMTETAYGLLTAEASAVWG) is interaction with BCL9.

As to quaternary structure, interacts with BCL9 via The PHD-type zinc finger motiv, and thereby becomes part of the nuclear beta-catenin/TCF complex. Identified in a complex with BCL9L, CDC73, CTNNB1 and PYGO1. Interacts with histone H3 mono-, di- or tri-methylated at 'Lys4' (H3K4me1, H3K4me2, H3K4me3); the interaction is enhanced by the interaction with BCL9.

It localises to the nucleus. In terms of biological role, involved in signal transduction through the Wnt pathway. The chain is Pygopus homolog 1 (PYGO1) from Homo sapiens (Human).